The sequence spans 98 residues: Keratin-associated protein 3-1 (98 aa).

Residue Ala2 is modified to N-acetylalanine. A run of 4 repeats spans residues Cys3–Arg7, Cys8–Arg12, Phe47–Ser51, and Tyr55–Asp59. The interval Cys3 to Asp59 is 4 X 5 AA repeats of C-C-X(3).

The protein belongs to the KRTAP type 3 family. As to quaternary structure, interacts with wool keratins. In terms of tissue distribution, wool.

Functionally, in the wool cortex, wool keratin intermediate filaments are embedded in an interfilamentous matrix, consisting of hair keratin-associated proteins (KRTAP), which are essential for the formation of a rigid and resistant wool shaft through their extensive disulfide bond cross-linking with abundant cysteine residues of wool keratins. The matrix proteins include the high-sulfur and high-glycine-tyrosine keratins. The protein is Keratin-associated protein 3-1 (KRTAP3-1) of Capra hircus (Goat).